Consider the following 352-residue polypeptide: Photosystem II D2 protein (352 aa).

N-acetylthreonine is present on threonine 2. Threonine 2 carries the phosphothreonine modification. The helical transmembrane segment at 40-60 (CAYMALGGWLTGTTFVTSWYT) threads the bilayer. Chlorophyll a is bound at residue histidine 117. Residues 124-140 (GFMLRQFEIAQSLKLRP) traverse the membrane as a helical segment. Pheophytin a contacts are provided by glutamine 129 and asparagine 142. The helical transmembrane segment at 152-165 (VFVSVFLIYPLGQA) threads the bilayer. Position 197 (histidine 197) interacts with chlorophyll a. A helical membrane pass occupies residues 207 to 227 (AALLCAIHGATVENTLFEDGD). A plastoquinone-binding residues include histidine 214 and phenylalanine 261. Histidine 214 is a Fe cation binding site. Histidine 268 is a Fe cation binding site. The helical transmembrane segment at 278-294 (GLWMSAIGVVGLALNLR) threads the bilayer.

It belongs to the reaction center PufL/M/PsbA/D family. In terms of assembly, PSII is composed of 1 copy each of membrane proteins PsbA, PsbB, PsbC, PsbD, PsbE, PsbF, PsbH, PsbI, PsbJ, PsbK, PsbL, PsbM, PsbT, PsbX, PsbY, PsbZ, Psb30/Ycf12, at least 3 peripheral proteins of the oxygen-evolving complex and a large number of cofactors. It forms dimeric complexes. The cofactor is The D1/D2 heterodimer binds P680, chlorophylls that are the primary electron donor of PSII, and subsequent electron acceptors. It shares a non-heme iron and each subunit binds pheophytin, quinone, additional chlorophylls, carotenoids and lipids. There is also a Cl(-1) ion associated with D1 and D2, which is required for oxygen evolution. The PSII complex binds additional chlorophylls, carotenoids and specific lipids..

It localises to the plastid. The protein localises to the chloroplast thylakoid membrane. It carries out the reaction 2 a plastoquinone + 4 hnu + 2 H2O = 2 a plastoquinol + O2. Its function is as follows. Photosystem II (PSII) is a light-driven water:plastoquinone oxidoreductase that uses light energy to abstract electrons from H(2)O, generating O(2) and a proton gradient subsequently used for ATP formation. It consists of a core antenna complex that captures photons, and an electron transfer chain that converts photonic excitation into a charge separation. The D1/D2 (PsbA/PsbD) reaction center heterodimer binds P680, the primary electron donor of PSII as well as several subsequent electron acceptors. D2 is needed for assembly of a stable PSII complex. The polypeptide is Photosystem II D2 protein (Stigeoclonium helveticum (Green alga)).